We begin with the raw amino-acid sequence, 216 residues long: Serine/threonine-protein phosphatase 1 (216 aa).

Residues Asp24, His26, Asp53, and Asn79 each coordinate Mn(2+). His80 (proton donor) is an active-site residue. Position 185 (His185) interacts with Mn(2+).

This sequence belongs to the PPP phosphatase family. PP-1 subfamily. Mn(2+) is required as a cofactor.

The catalysed reaction is O-phospho-L-seryl-[protein] + H2O = L-seryl-[protein] + phosphate. It carries out the reaction O-phospho-L-threonyl-[protein] + H2O = L-threonyl-[protein] + phosphate. Its activity is regulated as follows. Inhibited by cadmium, copper, zinc when added cobalt when added concomitantly with manganese. Can hydrolyze phosphorylated Ser-, Thr- or Tyr-substrates in vitro. The natural substrate is unknown. This chain is Serine/threonine-protein phosphatase 1 (pphA), found in Salmonella typhimurium (strain LT2 / SGSC1412 / ATCC 700720).